We begin with the raw amino-acid sequence, 356 residues long: Protein pelota homolog (356 aa).

Belongs to the eukaryotic release factor 1 family. Pelota subfamily. Monomer. A divalent metal cation is required as a cofactor.

The protein resides in the cytoplasm. Functionally, may function in recognizing stalled ribosomes, interact with stem-loop structures in stalled mRNA molecules, and effect endonucleolytic cleavage of the mRNA. May play a role in the release non-functional ribosomes and degradation of damaged mRNAs. Has endoribonuclease activity. This chain is Protein pelota homolog, found in Pyrococcus abyssi (strain GE5 / Orsay).